A 433-amino-acid chain; its full sequence is T-box transcription factor T (433 aa).

Positions 49 to 217 (LWLRFKELTN…YNPFAKAFLD (169 aa)) form a DNA-binding region, T-box.

In terms of assembly, monomer. Binds DNA as a monomer.

Its subcellular location is the nucleus. Involved in the transcriptional regulation of genes required for mesoderm formation and differentiation. Binds to a palindromic site (called T site) and activates gene transcription when bound to such a site. This chain is T-box transcription factor T, found in Gallus gallus (Chicken).